The chain runs to 220 residues: Deoxyribose-phosphate aldolase (220 aa).

Asp-89 (proton donor/acceptor) is an active-site residue. The Schiff-base intermediate with acetaldehyde role is filled by Lys-151. Lys-180 serves as the catalytic Proton donor/acceptor.

The protein belongs to the DeoC/FbaB aldolase family. DeoC type 1 subfamily.

The protein localises to the cytoplasm. It carries out the reaction 2-deoxy-D-ribose 5-phosphate = D-glyceraldehyde 3-phosphate + acetaldehyde. The protein operates within carbohydrate degradation; 2-deoxy-D-ribose 1-phosphate degradation; D-glyceraldehyde 3-phosphate and acetaldehyde from 2-deoxy-alpha-D-ribose 1-phosphate: step 2/2. In terms of biological role, catalyzes a reversible aldol reaction between acetaldehyde and D-glyceraldehyde 3-phosphate to generate 2-deoxy-D-ribose 5-phosphate. This chain is Deoxyribose-phosphate aldolase, found in Lactococcus lactis subsp. cremoris (strain SK11).